The primary structure comprises 100 residues: Small ubiquitin-related modifier 1 (100 aa).

Residues 19 to 96 (EYIKLKVIGQ…IEVYQEQTGG (78 aa)) form the Ubiquitin-like domain. Gly-96 is covalently cross-linked (Glycyl lysine isopeptide (Gly-Lys) (interchain with K-? in acceptor proteins)). Positions 97–100 (CRND) are excised as a propeptide.

It belongs to the ubiquitin family. SUMO subfamily. In terms of assembly, interacts with sae2, ube2i, ranbp2, pias1 and pias2. Covalently attached to a number of proteins. In terms of processing, cleavage of precursor form by a sentrin-specific protease is necessary for function.

The protein resides in the nucleus membrane. It is found in the nucleus speckle. It localises to the cytoplasm. Its subcellular location is the nucleus. The protein localises to the PML body. The protein resides in the cell membrane. Its function is as follows. Ubiquitin-like protein that can be covalently attached to proteins as a monomer or a lysine-linked polymer. Covalent attachment via an isopeptide bond to its substrates requires prior activation by the E1 complex sae1-sae2 and linkage to the E2 enzyme ube2i. This post-translational modification on lysine residues of proteins plays a crucial role in a number of cellular processes such as nuclear transport, DNA replication and repair, mitosis and signal transduction. Polymeric sumo1 chains are also susceptible to polyubiquitination which functions as a signal for proteasomal degradation of modified proteins. This is Small ubiquitin-related modifier 1 (sumo1) from Danio rerio (Zebrafish).